A 370-amino-acid chain; its full sequence is Glutamate 5-kinase (370 aa).

Lysine 17 lines the ATP pocket. Substrate contacts are provided by serine 56, aspartate 143, and asparagine 155. 175-176 is an ATP binding site; the sequence is SD. A PUA domain is found at 280 to 357; it reads RGTIRVDAGA…AEIVAILGYS (78 aa).

This sequence belongs to the glutamate 5-kinase family.

Its subcellular location is the cytoplasm. The enzyme catalyses L-glutamate + ATP = L-glutamyl 5-phosphate + ADP. Its pathway is amino-acid biosynthesis; L-proline biosynthesis; L-glutamate 5-semialdehyde from L-glutamate: step 1/2. Its function is as follows. Catalyzes the transfer of a phosphate group to glutamate to form L-glutamate 5-phosphate. The chain is Glutamate 5-kinase from Cereibacter sphaeroides (strain ATCC 17023 / DSM 158 / JCM 6121 / CCUG 31486 / LMG 2827 / NBRC 12203 / NCIMB 8253 / ATH 2.4.1.) (Rhodobacter sphaeroides).